We begin with the raw amino-acid sequence, 314 residues long: Porphobilinogen deaminase (314 aa).

Cysteine 249 is modified (S-(dipyrrolylmethanemethyl)cysteine).

It belongs to the HMBS family. In terms of assembly, monomer. Requires dipyrromethane as cofactor.

It carries out the reaction 4 porphobilinogen + H2O = hydroxymethylbilane + 4 NH4(+). It participates in porphyrin-containing compound metabolism; protoporphyrin-IX biosynthesis; coproporphyrinogen-III from 5-aminolevulinate: step 2/4. Its function is as follows. Tetrapolymerization of the monopyrrole PBG into the hydroxymethylbilane pre-uroporphyrinogen in several discrete steps. The sequence is that of Porphobilinogen deaminase from Brucella suis biovar 1 (strain 1330).